A 307-amino-acid polypeptide reads, in one-letter code: tRNA N6-adenosine threonylcarbamoyltransferase (307 aa).

Fe cation contacts are provided by H108 and H112. Substrate is bound by residues 131-135 (IVSGG), D164, G177, D181, and N266. D290 serves as a coordination point for Fe cation.

Belongs to the KAE1 / TsaD family. The cofactor is Fe(2+).

The protein localises to the cytoplasm. The enzyme catalyses L-threonylcarbamoyladenylate + adenosine(37) in tRNA = N(6)-L-threonylcarbamoyladenosine(37) in tRNA + AMP + H(+). Required for the formation of a threonylcarbamoyl group on adenosine at position 37 (t(6)A37) in tRNAs that read codons beginning with adenine. Is involved in the transfer of the threonylcarbamoyl moiety of threonylcarbamoyl-AMP (TC-AMP) to the N6 group of A37, together with TsaE and TsaB. TsaD likely plays a direct catalytic role in this reaction. This chain is tRNA N6-adenosine threonylcarbamoyltransferase, found in Mycoplasmopsis synoviae (strain 53) (Mycoplasma synoviae).